The chain runs to 317 residues: Ribosomal RNA small subunit methyltransferase H (317 aa).

S-adenosyl-L-methionine-binding positions include 37–39, aspartate 56, phenylalanine 85, aspartate 106, and glutamine 113; that span reads AGH.

Belongs to the methyltransferase superfamily. RsmH family.

It is found in the cytoplasm. The catalysed reaction is cytidine(1402) in 16S rRNA + S-adenosyl-L-methionine = N(4)-methylcytidine(1402) in 16S rRNA + S-adenosyl-L-homocysteine + H(+). Its function is as follows. Specifically methylates the N4 position of cytidine in position 1402 (C1402) of 16S rRNA. The protein is Ribosomal RNA small subunit methyltransferase H of Lactococcus lactis subsp. cremoris (strain SK11).